A 162-amino-acid chain; its full sequence is MATDVTFDTSMGSFTVELYNSHAPKTCKNFATLAQRGYYNNVIFHRIIPNFMVQTGDPTGTGRGGSSIYGEKFEDEIRSDLKHTGAGILSMANSGPNTNGSQFFITLAPTPWLDGKHTIFGRVKSGMRIIQRMGLVKTNNEDRPLDEVKILRAKVVEAGSEE.

Positions 1 to 155 (MATDVTFDTS…DEVKILRAKV (155 aa)) constitute a PPIase cyclophilin-type domain.

This sequence belongs to the cyclophilin-type PPIase family. PPIL1 subfamily.

The enzyme catalyses [protein]-peptidylproline (omega=180) = [protein]-peptidylproline (omega=0). PPIases accelerate the folding of proteins. It catalyzes the cis-trans isomerization of proline imidic peptide bonds in oligopeptides. This is Peptidyl-prolyl cis-trans isomerase-like 1 (cyp1) from Emericella nidulans (strain FGSC A4 / ATCC 38163 / CBS 112.46 / NRRL 194 / M139) (Aspergillus nidulans).